Reading from the N-terminus, the 134-residue chain is ATP synthase epsilon chain (134 aa).

This sequence belongs to the ATPase epsilon chain family. F-type ATPases have 2 components, CF(1) - the catalytic core - and CF(0) - the membrane proton channel. CF(1) has five subunits: alpha(3), beta(3), gamma(1), delta(1), epsilon(1). CF(0) has three main subunits: a, b and c.

It is found in the cell membrane. Its function is as follows. Produces ATP from ADP in the presence of a proton gradient across the membrane. The sequence is that of ATP synthase epsilon chain from Staphylococcus aureus (strain USA300).